The chain runs to 1450 residues: ABC transporter G family member 37 (1450 aa).

The 273-residue stretch at valine 175 to glutamate 447 folds into the ABC transporter 1 domain. Glycine 207–threonine 214 contacts ATP. Residues glutamate 525 to phenylalanine 737 enclose the ABC transmembrane type-2 1 domain. 6 consecutive transmembrane segments (helical) span residues valine 544 to isoleucine 564, alanine 581 to alanine 601, phenylalanine 615 to phenylalanine 635, phenylalanine 661 to isoleucine 681, alanine 687 to isoleucine 707, and leucine 773 to phenylalanine 793. The disordered stretch occupies residues serine 810 to glutamate 838. Positions lysine 817–glutamate 838 are enriched in basic and acidic residues. The ABC transporter 2 domain maps to valine 850–glutamate 1103. Residue glycine 895–threonine 902 participates in ATP binding. Residues glycine 1175–tyrosine 1389 form the ABC transmembrane type-2 2 domain. Transmembrane regions (helical) follow at residues tyrosine 1194–tryptophan 1214, methionine 1226–alanine 1246, isoleucine 1282–phenylalanine 1302, leucine 1313–isoleucine 1333, valine 1339–isoleucine 1359, proline 1365–isoleucine 1385, and valine 1422–valine 1442.

This sequence belongs to the ABC transporter superfamily. ABCG family. PDR (TC 3.A.1.205) subfamily. As to expression, expressed in roots and, to a lower extent, in seedlings.

It localises to the cell membrane. In terms of biological role, together with ABCG36, regulates auxin homeostasis and responses by playing a dual role in coumarin (and derivatives) and in the auxin precursor indole 3-butyric acid (IBA) efflux transport, thus influencing roots and root hairs development. Mediates coumarin exudation in the rhizosphere, especially in iron (Fe) deficient conditions, with a strong specificity for highly oxygenated compounds such as scopoletin and derivatives, dihydroxyscopoletin, esculetin, fraxin, fraxetin and esculin; these molecules improve plant Fe nutrition. Involved in the cellular detoxification of xenobiotics by promoting the excretion of some auxinic herbicides including 2,4-dichlorophenoxyacetic acid (2,4-D), 4-(2,4-dichlorophenoxy)butyric acid (2,4-DB) and other members of the phenoxyalkanoic acid family as well as the polar auxin transport inhibitor, napthylphthalamic acid (NPA). May be a general defense protein. The chain is ABC transporter G family member 37 from Arabidopsis thaliana (Mouse-ear cress).